A 338-amino-acid polypeptide reads, in one-letter code: Tetraacyldisaccharide 4'-kinase (338 aa).

51 to 58 (HLGGAGKT) is an ATP binding site.

The protein belongs to the LpxK family.

It carries out the reaction a lipid A disaccharide + ATP = a lipid IVA + ADP + H(+). The protein operates within glycolipid biosynthesis; lipid IV(A) biosynthesis; lipid IV(A) from (3R)-3-hydroxytetradecanoyl-[acyl-carrier-protein] and UDP-N-acetyl-alpha-D-glucosamine: step 6/6. Its function is as follows. Transfers the gamma-phosphate of ATP to the 4'-position of a tetraacyldisaccharide 1-phosphate intermediate (termed DS-1-P) to form tetraacyldisaccharide 1,4'-bis-phosphate (lipid IVA). This Rhodopseudomonas palustris (strain BisB5) protein is Tetraacyldisaccharide 4'-kinase.